The chain runs to 289 residues: Glucosamine-6-phosphate deaminase 1 (289 aa).

Lys-64 bears the N6-acetyllysine mark. Asp-72 acts as the Proton acceptor; for enolization step in catalysis. Asp-141 acts as the For ring-opening step in catalysis. His-143 serves as the catalytic Proton acceptor; for ring-opening step. The active-site For ring-opening step is Glu-148. Thr-161 carries the phosphothreonine modification.

It belongs to the glucosamine/galactosamine-6-phosphate isomerase family. Homohexamer.

It is found in the cytoplasm. It catalyses the reaction alpha-D-glucosamine 6-phosphate + H2O = beta-D-fructose 6-phosphate + NH4(+). The protein operates within nucleotide-sugar biosynthesis; UDP-N-acetyl-alpha-D-glucosamine biosynthesis; alpha-D-glucosamine 6-phosphate from D-fructose 6-phosphate: step 1/1. Allosterically activated by N-acetylglucosamine-6-phosphate (GlcNAc6P). Its function is as follows. Catalyzes the reversible conversion of alpha-D-glucosamine 6-phosphate (GlcN-6P) into beta-D-fructose 6-phosphate (Fru-6P) and ammonium ion, a regulatory reaction step in de novo uridine diphosphate-N-acetyl-alpha-D-glucosamine (UDP-GlcNAc) biosynthesis via hexosamine pathway. Deamination is coupled to aldo-keto isomerization mediating the metabolic flux from UDP-GlcNAc toward Fru-6P. At high ammonium level can drive amination and isomerization of Fru-6P toward hexosamines and UDP-GlcNAc synthesis. Has a role in fine tuning the metabolic fluctuations of cytosolic UDP-GlcNAc and their effects on hyaluronan synthesis that occur during tissue remodeling. Seems to trigger calcium oscillations in mammalian eggs. These oscillations serve as the essential trigger for egg activation and early development of the embryo. This is Glucosamine-6-phosphate deaminase 1 from Pongo abelii (Sumatran orangutan).